Reading from the N-terminus, the 78-residue chain is Translation initiation factor IF-1, chloroplastic (78 aa).

The S1-like domain occupies 1 to 72 (MEKQNLIDME…TKGRITYRLR (72 aa)).

It belongs to the IF-1 family. In terms of assembly, component of the 30S ribosomal translation pre-initiation complex which assembles on the 30S ribosome in the order IF-2 and IF-3, IF-1 and N-formylmethionyl-tRNA(fMet); mRNA recruitment can occur at any time during PIC assembly.

Its subcellular location is the plastid. The protein resides in the chloroplast. Its function is as follows. One of the essential components for the initiation of protein synthesis. Stabilizes the binding of IF-2 and IF-3 on the 30S subunit to which N-formylmethionyl-tRNA(fMet) subsequently binds. Helps modulate mRNA selection, yielding the 30S pre-initiation complex (PIC). Upon addition of the 50S ribosomal subunit IF-1, IF-2 and IF-3 are released leaving the mature 70S translation initiation complex. This Anthoceros angustus (Hornwort) protein is Translation initiation factor IF-1, chloroplastic.